Consider the following 233-residue polypeptide: Ribulose-phosphate 3-epimerase (233 aa).

Residue serine 16 participates in substrate binding. Residues histidine 41, aspartate 43, and histidine 74 each coordinate a divalent metal cation. The Proton acceptor role is filled by aspartate 43. Residues histidine 74, 150 to 153 (GFCG), 185 to 187 (DGG), and 207 to 208 (AS) each bind substrate. Aspartate 185 is a binding site for a divalent metal cation. Aspartate 185 acts as the Proton donor in catalysis.

The protein belongs to the ribulose-phosphate 3-epimerase family. The cofactor is a divalent metal cation.

The catalysed reaction is D-ribulose 5-phosphate = D-xylulose 5-phosphate. The protein operates within carbohydrate degradation. In terms of biological role, catalyzes the reversible epimerization of D-ribulose 5-phosphate to D-xylulose 5-phosphate. The polypeptide is Ribulose-phosphate 3-epimerase (Chlamydia trachomatis serovar D (strain ATCC VR-885 / DSM 19411 / UW-3/Cx)).